The following is a 162-amino-acid chain: Eukaryotic translation initiation factor 5 (162 aa).

Residues 59–162 (PPNLNPAVQG…EKDRMDIFYE (104 aa)) form a disordered region. Polar residues predominate over residues 85-109 (GDTNGDTSQVDDQNESLEASVNENS). Over residues 148-162 (DLEKREKDRMDIFYE) the composition is skewed to basic and acidic residues.

It belongs to the eIF-2-beta/eIF-5 family.

Functionally, catalyzes the hydrolysis of GTP bound to the 40S ribosomal initiation complex (40S.mRNA.Met-tRNA[F].eIF-2.GTP) with the subsequent joining of a 60S ribosomal subunit resulting in the release of eIF-2 and the guanine nucleotide. The subsequent joining of a 60S ribosomal subunit results in the formation of a functional 80S initiation complex (80S.mRNA.Met-tRNA[F]). The polypeptide is Eukaryotic translation initiation factor 5 (Tribolium castaneum (Red flour beetle)).